Here is a 309-residue protein sequence, read N- to C-terminus: Mitochondrial fission regulator 1-like (309 aa).

A disordered region spans residues 189-221 (DVTEEDEEEEEEEDREEEEEDVSELVPDPMPPV). The segment covering 190 to 211 (VTEEDEEEEEEEDREEEEEDVS) has biased composition (acidic residues). Phosphoserine is present on Ser253.

Belongs to the MTFR1 family.

Its subcellular location is the mitochondrion outer membrane. In terms of biological role, mitochondrial protein required for adaptation of miochondrial dynamics to metabolic changes. Regulates mitochondrial morphology at steady state and mediates AMPK-dependent stress-induced mitochondrial fragmentation via the control of OPA1 levels. This chain is Mitochondrial fission regulator 1-like (mtfr1l), found in Danio rerio (Zebrafish).